Here is a 114-residue protein sequence, read N- to C-terminus: Large ribosomal subunit protein bL20c (114 aa).

It belongs to the bacterial ribosomal protein bL20 family.

Its subcellular location is the plastid. The protein resides in the chloroplast. Its function is as follows. Binds directly to 23S ribosomal RNA and is necessary for the in vitro assembly process of the 50S ribosomal subunit. It is not involved in the protein synthesizing functions of that subunit. The chain is Large ribosomal subunit protein bL20c from Psilotum nudum (Whisk fern).